Here is a 242-residue protein sequence, read N- to C-terminus: Demethylmenaquinone methyltransferase (242 aa).

Residues T62, D83, and 112–113 (DV) contribute to the S-adenosyl-L-methionine site.

This sequence belongs to the class I-like SAM-binding methyltransferase superfamily. MenG/UbiE family.

The enzyme catalyses a 2-demethylmenaquinol + S-adenosyl-L-methionine = a menaquinol + S-adenosyl-L-homocysteine + H(+). It participates in quinol/quinone metabolism; menaquinone biosynthesis; menaquinol from 1,4-dihydroxy-2-naphthoate: step 2/2. Its function is as follows. Methyltransferase required for the conversion of demethylmenaquinol (DMKH2) to menaquinol (MKH2). The polypeptide is Demethylmenaquinone methyltransferase (Protochlamydia amoebophila (strain UWE25)).